A 158-amino-acid chain; its full sequence is MKSKKSKSTNNTIALNKKARHDYILQDKIEAGIELQGWEVKSIRSGKVNLSDSYVTLHKGEAFLVGSTIQPLNQASSHVVCEPLRQRKLLLNKRELDKLIGSVERQGYSILATAMYWKKNWVKVEIYLGKGKHEHDKRDAVKDRDWARDKERMMKHKV.

The protein belongs to the SmpB family.

The protein resides in the cytoplasm. Required for rescue of stalled ribosomes mediated by trans-translation. Binds to transfer-messenger RNA (tmRNA), required for stable association of tmRNA with ribosomes. tmRNA and SmpB together mimic tRNA shape, replacing the anticodon stem-loop with SmpB. tmRNA is encoded by the ssrA gene; the 2 termini fold to resemble tRNA(Ala) and it encodes a 'tag peptide', a short internal open reading frame. During trans-translation Ala-aminoacylated tmRNA acts like a tRNA, entering the A-site of stalled ribosomes, displacing the stalled mRNA. The ribosome then switches to translate the ORF on the tmRNA; the nascent peptide is terminated with the 'tag peptide' encoded by the tmRNA and targeted for degradation. The ribosome is freed to recommence translation, which seems to be the essential function of trans-translation. This Pseudoalteromonas atlantica (strain T6c / ATCC BAA-1087) protein is SsrA-binding protein.